The primary structure comprises 101 residues: Protein RnfH (101 aa).

This sequence belongs to the UPF0125 (RnfH) family.

The protein is Protein RnfH of Coxiella burnetii (strain CbuG_Q212) (Coxiella burnetii (strain Q212)).